Reading from the N-terminus, the 275-residue chain is WIMGHMVNAIEQVDEFLNLGANAIEFDIDFDENGIAKYTHHGIPCDCGRLCTKSAVFTEYLDNVRQVTSPGDPKFRKELVLLALDLKLQRISSEKAYVAGVDVATKLLDHYWKRGWNGGRAYILLNIPLVEDYEFIKGFKDTLRKEGHEQYNAKVGINFTGNEDLDEIRKVLEKLGEDEHIWQADGITSCFPRGTDRLEKALEKRDTPGYKYISKVYAWTLVRSSIMRRSLRLNVDGVMSNYPDRVVGVLKEKEFADKFRLATYADNPWEKFTSI.

The active site involves His5. 2 residues coordinate Mg(2+): Glu25 and Asp27. Residue His41 is the Nucleophile of the active site. 2 disulfides stabilise this stretch: Cys45–Cys51 and Cys47–Cys190. Asp85 provides a ligand contact to Mg(2+).

It belongs to the arthropod phospholipase D family. Class II subfamily. Mg(2+) serves as cofactor. In terms of tissue distribution, expressed by the venom gland.

Its subcellular location is the secreted. It carries out the reaction an N-(acyl)-sphingosylphosphocholine = an N-(acyl)-sphingosyl-1,3-cyclic phosphate + choline. The enzyme catalyses an N-(acyl)-sphingosylphosphoethanolamine = an N-(acyl)-sphingosyl-1,3-cyclic phosphate + ethanolamine. The catalysed reaction is a 1-acyl-sn-glycero-3-phosphocholine = a 1-acyl-sn-glycero-2,3-cyclic phosphate + choline. It catalyses the reaction a 1-acyl-sn-glycero-3-phosphoethanolamine = a 1-acyl-sn-glycero-2,3-cyclic phosphate + ethanolamine. In terms of biological role, dermonecrotic toxins cleave the phosphodiester linkage between the phosphate and headgroup of certain phospholipids (sphingolipid and lysolipid substrates), forming an alcohol (often choline) and a cyclic phosphate. This toxin acts on sphingomyelin (SM). It may also act on ceramide phosphoethanolamine (CPE), lysophosphatidylcholine (LPC) and lysophosphatidylethanolamine (LPE), but not on lysophosphatidylserine (LPS), and lysophosphatidylglycerol (LPG). It acts by transphosphatidylation, releasing exclusively cyclic phosphate products as second products. Induces dermonecrosis, hemolysis, increased vascular permeability, edema, inflammatory response, and platelet aggregation. The polypeptide is Dermonecrotic toxin SpaSicTox-betaIIA2 (Sicarius patagonicus (Six-eyed sand spider)).